Consider the following 96-residue polypeptide: Non-specific lipid-transfer protein 2G (96 aa).

Positions Met1–Ala29 are cleaved as a signal peptide. Cystine bridges form between Cys31/Cys63, Cys39/Cys53, Cys54/Cys89, and Cys65/Cys96.

It is found in the secreted. The protein resides in the cell wall. Transfer lipids across membranes. May play a role in plant defense or in the biosynthesis of cuticle layers. The sequence is that of Non-specific lipid-transfer protein 2G from Triticum aestivum (Wheat).